Reading from the N-terminus, the 139-residue chain is Putative nickel-responsive regulator (139 aa).

Residues H79, H90, H92, and C98 each coordinate Ni(2+).

The protein belongs to the transcriptional regulatory CopG/NikR family. Requires Ni(2+) as cofactor.

In terms of biological role, transcriptional regulator. The polypeptide is Putative nickel-responsive regulator (Anaeromyxobacter dehalogenans (strain 2CP-1 / ATCC BAA-258)).